The chain runs to 449 residues: uncharacterized protein (449 aa).

The span at M1 to D11 shows a compositional bias: acidic residues. Positions M1 to P33 are disordered. The chain crosses the membrane as a helical span at residues L45–V65. The interval Q349 to G449 is disordered. Positions P365–P387 are enriched in pro residues. Residues H409–E418 are compositionally biased toward low complexity. A compositionally biased stretch (pro residues) spans A437–G449.

The protein resides in the cell membrane. Its subcellular location is the secreted. Functionally, may play a role in septum formation. This is an uncharacterized protein from Mycobacterium tuberculosis (strain CDC 1551 / Oshkosh).